The chain runs to 323 residues: Leukocyte surface antigen CD47 (323 aa).

The first 18 residues, 1–18 (MWPLVAALLLGSACCGSA), serve as a signal peptide directing secretion. Glutamine 19 carries the pyrrolidone carboxylic acid modification. Residues 19–127 (QLLFNKTKSV…ELTREGETII (109 aa)) form the Ig-like V-type domain. The Extracellular segment spans residues 19-141 (QLLFNKTKSV…RVVSWFSPNE (123 aa)). 4 N-linked (GlcNAc...) asparagine glycosylation sites follow: asparagine 23, asparagine 34, asparagine 50, and asparagine 73. 2 disulfide bridges follow: cysteine 33-cysteine 263 and cysteine 41-cysteine 114. Serine 89 bears the Phosphoserine mark. Residue asparagine 111 is glycosylated (N-linked (GlcNAc...) asparagine). Residues 142–162 (NILIVIFPIFAILLFWGQFGI) traverse the membrane as a helical segment. Residues 163–176 (KTLKYRSGGMDEKT) are Cytoplasmic-facing. A helical transmembrane segment spans residues 177–197 (IALLVAGLVITVIVIVGAILF). Topologically, residues 198-207 (VPGEYSLKNA) are extracellular. An N-linked (GlcNAc...) asparagine glycan is attached at asparagine 206. A helical transmembrane segment spans residues 208–228 (TGLGLIVTSTGILILLHYYVF). Over 229–235 (STAIGLT) the chain is Cytoplasmic. The chain crosses the membrane as a helical span at residues 236-256 (SFVIAILVIQVIAYILAVVGL). Residues 257 to 268 (SLCIAACIPMHG) are Extracellular-facing. The helical transmembrane segment at 269-289 (PLLISGLSILALAQLLGLVYM) threads the bilayer. At 290–323 (KFVASNQKTIQPPRKAVEEPLNAFKESKGMMNDE) the chain is on the cytoplasmic side.

As to quaternary structure, monomer. Interacts with THBS1 (via the C-terminal domain). Interacts with SIRPA. Interacts with FAS/CD95; interaction may be enhanced by functional activation. Interacts with SIRPG, UBQLN1 and UBQLN2. May interact with fibrinogen. Interacts with Aedes aegypti neutrophil-stimulating factor 1; the interaction results in inhibition of phagocytosis activity of macrophages. As to expression, very broadly distributed on normal adult tissues, as well as ovarian tumors, being especially abundant in some epithelia and the brain. Macrophages.

Its subcellular location is the cell membrane. Its function is as follows. Adhesive protein that mediates cell-to-cell interactions. Acts as a receptor for thrombospondin THBS1 and as modulator of integrin signaling through the activation of heterotrimeric G proteins. Involved in signal transduction, cardiovascular homeostasis, inflammation, apoptosis, angiogenesis, cellular self-renewal, and immunoregulation. Plays a role in modulating pulmonary endothelin EDN1 signaling. Modulates nitrous oxide (NO) signaling, in response to THBS1, hence playing a role as a pressor agent, supporting blood pressure. Plays an important role in memory formation and synaptic plasticity in the hippocampus. Receptor for SIRPA, binding to which prevents maturation of immature dendritic cells and inhibits cytokine production by mature dendritic cells. Interaction with SIRPG mediates cell-cell adhesion, enhances superantigen-dependent T-cell-mediated proliferation and costimulates T-cell activation. Positively modulates FAS-dependent apoptosis in T-cells, perhaps by enhancing FAS clustering. Plays a role in suppressing angiogenesis and may be involved in metabolic dysregulation during normal aging. In response to THBS1, negatively modulates wound healing. Inhibits stem cell self-renewal, in response to THBS1, probably by regulation of the stem cell transcription factors POU5F1/OCT4, SOX2, MYC/c-Myc and KLF4. May play a role in membrane transport and/or integrin dependent signal transduction. May prevent premature elimination of red blood cells. The polypeptide is Leukocyte surface antigen CD47 (CD47) (Homo sapiens (Human)).